The chain runs to 4662 residues: Protein PF3D7_1417600 (4662 aa).

Helical transmembrane passes span 136–156 (INYVFLQIIYNIILYFVYLYI) and 161–181 (YIYYILRTYLFLLLYNSFHII). One copy of the LRR 1 repeat lies at 466-489 (IKNIDSINKNHKRLIKISNYNITN). The tract at residues 583–710 (YRNDGDVNNK…KMKPDNTLNE (128 aa)) is disordered. Residues 590–644 (NNKNGYNNNEHSNSSNERSNNNGDNNNNNHNNNNHNNNHHNNGSNNHNGNNNSNN) are compositionally biased toward low complexity. Over residues 650–666 (DDDKKGNDKKNEDKDDE) the composition is skewed to basic and acidic residues. The span at 690–701 (KKRKEKSKNKNK) shows a compositional bias: basic residues. The region spanning 783-856 (YKPTEPVNIF…ISNDIKMFWF (74 aa)) is the HSA domain. The segment at 942-967 (GLMNKMSHQNGKNNNHNDYNNKCEDN) is disordered. Residues 1150–1172 (NVHINHIQYDDNNLYYNDDLYNY) form an LRR 2 repeat. Residues 1505-1524 (NNNNNSNNNNSNSNNNSNSN) show a composition bias toward low complexity. Disordered regions lie at residues 1505 to 1540 (NNNNNSNNNNSNSNNNSNSNIKTKESVSTTNHNNSS) and 1705 to 1761 (KINS…NEKD). Positions 1710–1761 (NNDKSDDKNDDKNDKKNDGKNDKNDEKDDNKTGEKGDNKIGEKDDNKINEKD) are enriched in basic and acidic residues. 2 LRR repeats span residues 2063 to 2086 (ITKVKFLPLFSSNNVNKLIGMFNK) and 2129 to 2153 (DEEINILNKNDDKINEYKDELNVKD). Positions 2228-2261 (KNKSNKKKRAKKNIKLGEEENESECNNEGECNNE) are disordered. The segment covering 2230–2241 (KSNKKKRAKKNI) has biased composition (basic residues). Over residues 2246–2261 (EENESECNNEGECNNE) the composition is skewed to acidic residues. 4 LRR repeats span residues 2672–2695 (LDKLKNFPINESIESSKNNNKTID), 2773–2796 (NTVLKDTIIESNEISCIVDKTVDI), 2864–2888 (INDDNKMNNFVNNNITHINNNVNNN), and 2904–2929 (ANNINNLNVNHLNNNISQINNNYNNS). Positions 2956–2975 (MNNTKQRSHSSYHTSFPMQN) are disordered. 6 LRR repeats span residues 3377 to 3400 (QNNMNTINMNNINMNNINMNNITM), 3438 to 3461 (NNSMNNINISNNINYNISNNYNNS), 3756 to 3781 (SQRLQNIHLGNQQNDIQHMNLDNINN), 3935 to 3960 (QPNINNVGMNQPNINNVGMNQPNINN), 3965 to 3985 (QPNINNVGMNQPNINNVSMNQ), and 3986 to 4010 (PNINNVNMNQPNINNVSMNQPNINN). The stretch at 4203–4272 (DMNQQERLQQ…ERLQQKWEQQ (70 aa)) forms a coiled coil. 2 LRR repeats span residues 4296–4321 (YQELNNHTLQENTIAKDSMRQHIFLK) and 4333–4357 (QKMHSHQLQTEKMKTQQLSAHSLQQ). Positions 4384 to 4412 (QMNHQQINKHQMNQQQMNKQQMNQQQINQ) are disordered.

It localises to the membrane. This chain is Protein PF3D7_1417600, found in Plasmodium falciparum (isolate 3D7).